The sequence spans 142 residues: Probable pilin MJ0832.1 (142 aa).

Positions 1-8 (MLKFRKRG) are excised as a propeptide. The short motif at 9–17 (QISLEFSLL) is the QXSXEXXXL element.

The N-terminus is cleaved by the prepilin peptidase EppA, which recognizes the class III signal sequence.

The protein resides in the secreted. It localises to the cell surface. The protein localises to the fimbrium. The polypeptide is Probable pilin MJ0832.1 (Methanocaldococcus jannaschii (strain ATCC 43067 / DSM 2661 / JAL-1 / JCM 10045 / NBRC 100440) (Methanococcus jannaschii)).